Consider the following 302-residue polypeptide: Bifunctional protein FolD (302 aa).

Residues 165–167 (GRS), S190, and I231 each bind NADP(+).

Belongs to the tetrahydrofolate dehydrogenase/cyclohydrolase family. As to quaternary structure, homodimer.

It carries out the reaction (6R)-5,10-methylene-5,6,7,8-tetrahydrofolate + NADP(+) = (6R)-5,10-methenyltetrahydrofolate + NADPH. The catalysed reaction is (6R)-5,10-methenyltetrahydrofolate + H2O = (6R)-10-formyltetrahydrofolate + H(+). It functions in the pathway one-carbon metabolism; tetrahydrofolate interconversion. Functionally, catalyzes the oxidation of 5,10-methylenetetrahydrofolate to 5,10-methenyltetrahydrofolate and then the hydrolysis of 5,10-methenyltetrahydrofolate to 10-formyltetrahydrofolate. The chain is Bifunctional protein FolD from Prochlorococcus marinus (strain MIT 9303).